The following is a 111-amino-acid chain: uncharacterized protein (111 aa).

Its subcellular location is the mitochondrion. This is an uncharacterized protein from Arabidopsis thaliana (Mouse-ear cress).